The sequence spans 85 residues: Cell division topological specificity factor (85 aa).

This sequence belongs to the MinE family.

Prevents the cell division inhibition by proteins MinC and MinD at internal division sites while permitting inhibition at polar sites. This ensures cell division at the proper site by restricting the formation of a division septum at the midpoint of the long axis of the cell. In Shewanella sp. (strain ANA-3), this protein is Cell division topological specificity factor.